The primary structure comprises 136 residues: Large ribosomal subunit protein uL16 (136 aa).

This sequence belongs to the universal ribosomal protein uL16 family. In terms of assembly, part of the 50S ribosomal subunit.

Binds 23S rRNA and is also seen to make contacts with the A and possibly P site tRNAs. In Photobacterium profundum (strain SS9), this protein is Large ribosomal subunit protein uL16.